A 492-amino-acid chain; its full sequence is Lysine--tRNA ligase (492 aa).

2 residues coordinate Mg(2+): E403 and E410.

It belongs to the class-II aminoacyl-tRNA synthetase family. Homodimer. It depends on Mg(2+) as a cofactor.

The protein localises to the cytoplasm. It carries out the reaction tRNA(Lys) + L-lysine + ATP = L-lysyl-tRNA(Lys) + AMP + diphosphate. This Mycoplasmoides gallisepticum (strain R(low / passage 15 / clone 2)) (Mycoplasma gallisepticum) protein is Lysine--tRNA ligase.